Reading from the N-terminus, the 86-residue chain is Large ribosomal subunit protein bL27 (86 aa).

Residues 1–10 (MAQKKGGGST) show a composition bias toward gly residues. The disordered stretch occupies residues 1 to 21 (MAQKKGGGSTRNGRDSESKRL).

This sequence belongs to the bacterial ribosomal protein bL27 family.

In Cupriavidus taiwanensis (strain DSM 17343 / BCRC 17206 / CCUG 44338 / CIP 107171 / LMG 19424 / R1) (Ralstonia taiwanensis (strain LMG 19424)), this protein is Large ribosomal subunit protein bL27.